We begin with the raw amino-acid sequence, 245 residues long: NAD(P)H-quinone oxidoreductase subunit K (245 aa).

Residues Cys58, Cys59, Cys123, and Cys154 each contribute to the [4Fe-4S] cluster site. The interval 210-245 is disordered; it reads SDTRSAPPKELAEAIGMPIPPALLTEKAQKEEQTRG. Residues 236–245 show a composition bias toward basic and acidic residues; sequence KAQKEEQTRG.

Belongs to the complex I 20 kDa subunit family. As to quaternary structure, NDH-1 can be composed of about 15 different subunits; different subcomplexes with different compositions have been identified which probably have different functions. It depends on [4Fe-4S] cluster as a cofactor.

Its subcellular location is the cellular thylakoid membrane. The enzyme catalyses a plastoquinone + NADH + (n+1) H(+)(in) = a plastoquinol + NAD(+) + n H(+)(out). It catalyses the reaction a plastoquinone + NADPH + (n+1) H(+)(in) = a plastoquinol + NADP(+) + n H(+)(out). Functionally, NDH-1 shuttles electrons from an unknown electron donor, via FMN and iron-sulfur (Fe-S) centers, to quinones in the respiratory and/or the photosynthetic chain. The immediate electron acceptor for the enzyme in this species is believed to be plastoquinone. Couples the redox reaction to proton translocation, and thus conserves the redox energy in a proton gradient. Cyanobacterial NDH-1 also plays a role in inorganic carbon-concentration. This chain is NAD(P)H-quinone oxidoreductase subunit K, found in Nostoc punctiforme (strain ATCC 29133 / PCC 73102).